A 195-amino-acid chain; its full sequence is Pyruvoyl-dependent arginine decarboxylase AaxB (195 aa).

Pyruvic acid (Ser) is present on Ser53.

The protein belongs to the pyruvoyl-dependent arginine decarboxylase family. Trimer of an alpha-beta dimer. Requires pyruvate as cofactor.

Its subcellular location is the cytoplasm. It carries out the reaction L-arginine + H(+) = agmatine + CO2. With respect to regulation, inhibited by argininamide. Its function is as follows. Part of the AaxABC system, catalyzes the decarboxylation of L-arginine. The arginine uptake by the bacterium in the macrophage may be a virulence factor against the host innate immune response. This is Pyruvoyl-dependent arginine decarboxylase AaxB (aaxB) from Chlamydia pneumoniae (Chlamydophila pneumoniae).